The primary structure comprises 255 residues: Mediator of RNA polymerase II transcription subunit 18 (255 aa).

Belongs to the Mediator complex subunit 18 family. Component of the Mediator complex.

It is found in the nucleus. Component of the Mediator complex, a coactivator involved in the regulated transcription of nearly all RNA polymerase II-dependent genes. Mediator functions as a bridge to convey information from gene-specific regulatory proteins to the basal RNA polymerase II transcription machinery. Mediator is recruited to promoters by direct interactions with regulatory proteins and serves as a scaffold for the assembly of a functional preinitiation complex with RNA polymerase II and the general transcription factors. The sequence is that of Mediator of RNA polymerase II transcription subunit 18 (SRB5) from Kluyveromyces lactis (strain ATCC 8585 / CBS 2359 / DSM 70799 / NBRC 1267 / NRRL Y-1140 / WM37) (Yeast).